The following is a 161-amino-acid chain: Nucleotide-binding protein XCV3791 (161 aa).

It belongs to the YajQ family.

Its function is as follows. Nucleotide-binding protein. This is Nucleotide-binding protein XCV3791 from Xanthomonas euvesicatoria pv. vesicatoria (strain 85-10) (Xanthomonas campestris pv. vesicatoria).